The sequence spans 474 residues: Coronin-1C (474 aa).

WD repeat units follow at residues 25–70, 78–118, 128–168, 172–202, 215–249, and 263–303; these read DDIR…GRID, GHTG…LTLS, GHSK…ALIN, MHSDMIYNVSWNRNGSLICTASKDKKVRVID, AHEGARPMRAIFLADGNVFTTGFSRMSERQLALWN, and DTSN…PYVH. Positions 436–474 form a coiled coil; it reads QNEAKLDEILKEIKSIKDTICNQDERISKLEQQMAKIAA. An N6-acetyllysine modification is found at Lys-446.

Belongs to the WD repeat coronin family. Binds F-actin. Interacts with RCC2. Interacts preferentially with nucleotide-free and GDP-bound RAC1. Interacts with VIM (via head domain). Isoform 1 and isoform 2 appear as homotrimers, while isoform 3 seems to exist as monomers. Interacts with MICAL2; this interaction recruits MICAL2 to the actin filaments. In terms of tissue distribution, ubiquitous.

It is found in the cell membrane. The protein localises to the cell projection. Its subcellular location is the lamellipodium. The protein resides in the ruffle membrane. It localises to the cytoplasm. It is found in the cytoskeleton. The protein localises to the cell cortex. Its subcellular location is the endosome membrane. The protein resides in the sarcolemma. It localises to the myofibril. It is found in the sarcomere. The protein localises to the synapse. Its function is as follows. Plays a role in directed cell migration by regulating the activation and subcellular location of RAC1. Increases the presence of activated RAC1 at the leading edge of migrating cells. Required for normal organization of the cytoskeleton, including the actin cytoskeleton, microtubules and the vimentin intermediate filaments. Plays a role in endoplasmic reticulum-associated endosome fission: localizes to endosome membrane tubules and promotes recruitment of TMCC1, leading to recruitment of the endoplasmic reticulum to endosome tubules for fission. Endosome membrane fission of early and late endosomes is essential to separate regions destined for lysosomal degradation from carriers to be recycled to the plasma membrane. Required for normal cell proliferation, cell migration, and normal formation of lamellipodia. Required for normal distribution of mitochondria within cells. In terms of biological role, involved in myogenic differentiation. The chain is Coronin-1C from Homo sapiens (Human).